The primary structure comprises 241 residues: Cobalt transport protein CbiM (241 aa).

An N-terminal signal peptide occupies residues 1–23; that stretch reads MKKNLTFFMVIALLFTITPNVYA. 6 consecutive transmembrane segments (helical) span residues 29 to 49, 66 to 86, 98 to 118, 121 to 141, 160 to 180, and 202 to 222; these read GFLP…FIII, MLLG…IPSV, LSAI…VLIF, ILLA…MGIM, VAVF…TSVQ, and IFSI…VIIF.

The protein belongs to the CbiM family. As to quaternary structure, forms an energy-coupling factor (ECF) transporter complex composed of an ATP-binding protein (A component, CbiO), a transmembrane protein (T component, CbiQ) and 2 possible substrate-capture proteins (S components, CbiM and CbiN) of unknown stoichimetry.

It is found in the cell membrane. The protein operates within cofactor biosynthesis; adenosylcobalamin biosynthesis. Functionally, part of the energy-coupling factor (ECF) transporter complex CbiMNOQ involved in cobalt import. In Clostridium tetani (strain Massachusetts / E88), this protein is Cobalt transport protein CbiM.